Consider the following 344-residue polypeptide: Transmembrane protein 268 (344 aa).

The disordered stretch occupies residues 1-31 (MACEPQMDPGGAAGPLPTSSPGWSPLPGGSP). A compositionally biased stretch (low complexity) spans 14–27 (GPLPTSSPGWSPLP). The next 2 membrane-spanning stretches (helical) occupy residues 106–126 (AFAV…SQMF) and 133–153 (AGVL…VVIF). The tract at residues 244-266 (TANEGPENLLEETPLLPDRPGST) is disordered. Residues 247–259 (EGPENLLEETPLL) are compositionally biased toward low complexity.

Interacts with ITGAM; this interaction inhibits ITGAM degradation via the endosome-lysosome pathway. Interacts with ITGB4; this interaction prevents ITGB4 degradation.

It localises to the cell membrane. Its function is as follows. Stabilizes cell surface expression of ITGAM and participates in the adhesion and migration of phagocytes during bacterial clearance. In Bos taurus (Bovine), this protein is Transmembrane protein 268 (TMEM268).